A 642-amino-acid polypeptide reads, in one-letter code: 1-deoxy-D-xylulose-5-phosphate synthase (642 aa).

Thiamine diphosphate contacts are provided by residues His79 and 120–122 (AHS). Asp151 is a binding site for Mg(2+). Residues 152–153 (GS), Asn180, Tyr290, and Glu372 each bind thiamine diphosphate. Mg(2+) is bound at residue Asn180.

It belongs to the transketolase family. DXPS subfamily. Homodimer. It depends on Mg(2+) as a cofactor. Thiamine diphosphate is required as a cofactor.

It catalyses the reaction D-glyceraldehyde 3-phosphate + pyruvate + H(+) = 1-deoxy-D-xylulose 5-phosphate + CO2. Its pathway is metabolic intermediate biosynthesis; 1-deoxy-D-xylulose 5-phosphate biosynthesis; 1-deoxy-D-xylulose 5-phosphate from D-glyceraldehyde 3-phosphate and pyruvate: step 1/1. Its function is as follows. Catalyzes the acyloin condensation reaction between C atoms 2 and 3 of pyruvate and glyceraldehyde 3-phosphate to yield 1-deoxy-D-xylulose-5-phosphate (DXP). The protein is 1-deoxy-D-xylulose-5-phosphate synthase of Beijerinckia indica subsp. indica (strain ATCC 9039 / DSM 1715 / NCIMB 8712).